A 147-amino-acid chain; its full sequence is Phosphoribosyl-AMP cyclohydrolase (147 aa).

A Mg(2+)-binding site is contributed by D91. Residue C92 coordinates Zn(2+). The Mg(2+) site is built by D93 and D95. The Zn(2+) site is built by C109 and C116.

This sequence belongs to the PRA-CH family. In terms of assembly, homodimer. Requires Mg(2+) as cofactor. Zn(2+) serves as cofactor.

The protein resides in the cytoplasm. The catalysed reaction is 1-(5-phospho-beta-D-ribosyl)-5'-AMP + H2O = 1-(5-phospho-beta-D-ribosyl)-5-[(5-phospho-beta-D-ribosylamino)methylideneamino]imidazole-4-carboxamide. It functions in the pathway amino-acid biosynthesis; L-histidine biosynthesis; L-histidine from 5-phospho-alpha-D-ribose 1-diphosphate: step 3/9. Functionally, catalyzes the hydrolysis of the adenine ring of phosphoribosyl-AMP. The protein is Phosphoribosyl-AMP cyclohydrolase of Rhodopseudomonas palustris (strain BisB18).